Reading from the N-terminus, the 994-residue chain is Phosphoenolpyruvate carboxylase (994 aa).

The disordered stretch occupies residues 1 to 66; sequence MKSSGSARAT…QGRTREDKDR (66 aa). 2 stretches are compositionally biased toward low complexity: residues 14–25 and 41–54; these read AVSSSSAPAHAE and AAAR…AASA. Catalysis depends on residues histidine 204 and lysine 646.

The protein belongs to the PEPCase type 1 family. The cofactor is Mg(2+).

The enzyme catalyses oxaloacetate + phosphate = phosphoenolpyruvate + hydrogencarbonate. Functionally, forms oxaloacetate, a four-carbon dicarboxylic acid source for the tricarboxylic acid cycle. The protein is Phosphoenolpyruvate carboxylase of Burkholderia mallei (strain NCTC 10247).